A 291-amino-acid chain; its full sequence is Lipoyl synthase 1 (291 aa).

[4Fe-4S] cluster contacts are provided by Cys-34, Cys-39, Cys-45, Cys-60, Cys-64, Cys-67, and Ser-274. The Radical SAM core domain maps to 46 to 263; it reads FQAGTATFLI…QVYGEELGFL (218 aa).

It belongs to the radical SAM superfamily. Lipoyl synthase family. Requires [4Fe-4S] cluster as cofactor.

The protein resides in the cytoplasm. The enzyme catalyses [[Fe-S] cluster scaffold protein carrying a second [4Fe-4S](2+) cluster] + N(6)-octanoyl-L-lysyl-[protein] + 2 oxidized [2Fe-2S]-[ferredoxin] + 2 S-adenosyl-L-methionine + 4 H(+) = [[Fe-S] cluster scaffold protein] + N(6)-[(R)-dihydrolipoyl]-L-lysyl-[protein] + 4 Fe(3+) + 2 hydrogen sulfide + 2 5'-deoxyadenosine + 2 L-methionine + 2 reduced [2Fe-2S]-[ferredoxin]. The protein operates within protein modification; protein lipoylation via endogenous pathway; protein N(6)-(lipoyl)lysine from octanoyl-[acyl-carrier-protein]: step 2/2. Catalyzes the radical-mediated insertion of two sulfur atoms into the C-6 and C-8 positions of the octanoyl moiety bound to the lipoyl domains of lipoate-dependent enzymes, thereby converting the octanoylated domains into lipoylated derivatives. In Nostoc sp. (strain PCC 7120 / SAG 25.82 / UTEX 2576), this protein is Lipoyl synthase 1.